Consider the following 497-residue polypeptide: Putative diacyglycerol O-acyltransferase Rv3480c (497 aa).

His-143 functions as the Proton acceptor in the catalytic mechanism.

The protein belongs to the long-chain O-acyltransferase family.

The catalysed reaction is an acyl-CoA + a 1,2-diacyl-sn-glycerol = a triacyl-sn-glycerol + CoA. It carries out the reaction di-(9Z)-octadecenoylglycerol + (9Z)-octadecenoyl-CoA = 1,2,3-tri-(9Z-octadecenoyl)-glycerol + CoA. It catalyses the reaction hexadecan-1-ol + hexadecanoyl-CoA = hexadecanyl hexadecanoate + CoA. Its pathway is glycerolipid metabolism; triacylglycerol biosynthesis. Its function is as follows. Upon expression in E.coli has a weak triacylglycerol synthase function, making triacylglycerol (TG) from diolein and long-chain fatty acyl-CoA. Also functions weakly as a wax synthase, as it incorporates palmityl alcohol into wax esters in the presence of palmitoyl-CoA. The sequence is that of Putative diacyglycerol O-acyltransferase Rv3480c from Mycobacterium tuberculosis (strain ATCC 25618 / H37Rv).